Here is a 251-residue protein sequence, read N- to C-terminus: Small ribosomal subunit protein uS2 (251 aa).

Belongs to the universal ribosomal protein uS2 family.

In Aromatoleum aromaticum (strain DSM 19018 / LMG 30748 / EbN1) (Azoarcus sp. (strain EbN1)), this protein is Small ribosomal subunit protein uS2.